Here is a 556-residue protein sequence, read N- to C-terminus: Formate--tetrahydrofolate ligase (556 aa).

Thr65–Thr72 contacts ATP.

The protein belongs to the formate--tetrahydrofolate ligase family.

The catalysed reaction is (6S)-5,6,7,8-tetrahydrofolate + formate + ATP = (6R)-10-formyltetrahydrofolate + ADP + phosphate. The protein operates within one-carbon metabolism; tetrahydrofolate interconversion. The polypeptide is Formate--tetrahydrofolate ligase (Kosmotoga olearia (strain ATCC BAA-1733 / DSM 21960 / TBF 19.5.1)).